Reading from the N-terminus, the 154-residue chain is MHCPFCRHPDSRVIDSRETDEGQAIRRRRSCPECGRRFTTVETAVLAVVKRSGVTEPFSREKVISGVRRACQGRQVDDDALNLLAQQVEDSVRAAGSPEIPSHDVGLAILGPLRELDEVAYLRFASVYRSFSSADDFAREIEALRAHRNLSAHS.

The segment at 3–34 (CPFCRHPDSRVIDSRETDEGQAIRRRRSCPEC) is a zinc-finger region. The region spanning 46-136 (LAVVKRSGVT…VYRSFSSADD (91 aa)) is the ATP-cone domain.

Belongs to the NrdR family. The cofactor is Zn(2+).

Negatively regulates transcription of bacterial ribonucleotide reductase nrd genes and operons by binding to NrdR-boxes. This is Transcriptional repressor NrdR from Mycobacterium bovis (strain ATCC BAA-935 / AF2122/97).